Reading from the N-terminus, the 70-residue chain is Large ribosomal subunit protein bL31 (70 aa).

Zn(2+) contacts are provided by C16, C18, C37, and C40.

It belongs to the bacterial ribosomal protein bL31 family. Type A subfamily. As to quaternary structure, part of the 50S ribosomal subunit. It depends on Zn(2+) as a cofactor.

Functionally, binds the 23S rRNA. The sequence is that of Large ribosomal subunit protein bL31 from Shewanella amazonensis (strain ATCC BAA-1098 / SB2B).